Here is a 410-residue protein sequence, read N- to C-terminus: Arginine deiminase (410 aa).

The active-site Amidino-cysteine intermediate is Cys-400.

The protein belongs to the arginine deiminase family.

It is found in the cytoplasm. The catalysed reaction is L-arginine + H2O = L-citrulline + NH4(+). Its pathway is amino-acid degradation; L-arginine degradation via ADI pathway; carbamoyl phosphate from L-arginine: step 1/2. The chain is Arginine deiminase from Bacillus cereus (strain ATCC 10987 / NRS 248).